Here is a 1097-residue protein sequence, read N- to C-terminus: Nitric oxide synthase-like protein (1097 aa).

Cysteine 77 provides a ligand contact to heme b. L-arginine is bound by residues glutamine 140, tryptophan 249, tyrosine 250, glutamate 254, and asparagine 259. Positions 340 and 353 each coordinate (6R)-L-erythro-5,6,7,8-tetrahydrobiopterin. A heme b-binding site is contributed by tyrosine 368. The segment at 387 to 410 (KRPINRKFHFKQIARAVKFTSKLF) is calmodulin-binding. A Flavodoxin-like domain is found at 420-615 (ATVLYATETG…AFRKWASSVF (196 aa)). FMN is bound by residues 426–430 (TETGK) and 561–592 (VFALGSSAYPNFCNFGKYVDKLLVDLGGERIH). Residues 669–914 (KQFVSCTVKA…IRSAPNFHLP (246 aa)) enclose the FAD-binding FR-type domain. FAD is bound by residues 704 to 715 (YNPGDHVGIIAC) and 847 to 857 (LQPRFYSISSS). NADP(+) is bound by residues 922–940 (ILIGPGTGIAPFRGFWHHR) and 1019–1034 (GAHFYVCGDCKMAEDV).

It belongs to the NOS family. Heme b serves as cofactor. Requires FAD as cofactor. It depends on FMN as a cofactor.

The catalysed reaction is 2 L-arginine + 3 NADPH + 4 O2 + H(+) = 2 L-citrulline + 2 nitric oxide + 3 NADP(+) + 4 H2O. Produces nitric oxide (NO) which is a messenger molecule with diverse functions throughout the body. In Bombyx mori (Silk moth), this protein is Nitric oxide synthase-like protein.